The sequence spans 886 residues: MAAAAMAISPSIHLHLHLHLHHPPRLHRLLHLSTTSPYPWLSAWPTAHRRRVPLRRPASALDLRPEPSPSSDSDDDAAFGTSRSSSRSAMSLILSRLRNSGYSYSPPELPPRPPRGSVEDVFRVDDGVVPNARGGFDDDAESALVDARFPWELPMPPPEAGPRAARSKAWMAELTLPEAELRRLRHAGMRLKSRIKVGGAGVTREIVERIRDRWRNDEVVRIKVTGTPALNMRLFHEILERKTGGLVIWRSGTSVSLYRGVAYDIPEPTKGTSKNTQTLGMKSSIKEPPGHSLLPNEKVNEMQDNNGALVSNAEKDTLVEPVPEIKYEDEIDKLLDELGPRYDDWPRPDPSPVDADLLPATVPGYKPPFRVLPYGVRPSLSRRDTTNLRRLARGLPPHFALGRSRQLQGLAAAMVKLWEKSSIAKIALKRGVQLTTSERMAEDIKKLTGGVMLSRNNDFMVFYRGKDFLSPELAEKLLERERWAKSLQDEEQARLNAASSFSSRTEAPVEPTVAGTLGETLEANSKYGNKLDENYENKMTRTVEAARHADLVRKLEWKLQLAQKKIEKAERVLGKVETALKPTEGIQPPETITDEERFMFRKLGLRMKAFLLLGRRGVFDGTIENMHLHWKYRELVKILVKAKSFGDVKKIALSLEAESGGILVSVDKVSKGYAIVVFRGKDYARPSKLRPRNLLSKRKALARSIEIQRREALSHHIATLNRRVKKLKAELLQMEGVKEEGDVELYAKLDSAYSSDEEDVEDEDDEAYLRSFDNSVAVQNGDDRTSLDGSDANSDDEGDYSDEDDDEDDDNDEEDGFDYENDDEDDVPPTTSDGDLYNHTDFGSSDSENYVSLSGRGDPDVKSKGSALDSRNSYSEQSTELTNTCS.

The transit peptide at 1-70 directs the protein to the chloroplast and mitochondrion; it reads MAAAAMAISP…LDLRPEPSPS (70 aa). 2 disordered regions span residues 56–84 and 269–291; these read RPAS…TSRS and TKGT…PPGH. 3 consecutive CRM domains span residues 174–270, 378–475, and 590–690; these read LTLP…EPTK, PSLS…ELAE, and ETIT…SKLR. Over residues 270 to 281 the composition is skewed to polar residues; the sequence is KGTSKNTQTLGM. The tract at residues 771–886 is disordered; sequence SFDNSVAVQN…QSTELTNTCS (116 aa). Positions 793–827 are enriched in acidic residues; that stretch reads NSDDEGDYSDEDDDEDDDNDEEDGFDYENDDEDDV. Composition is skewed to polar residues over residues 841–852 and 869–886; these read DFGSSDSENYVS and DSRN…NTCS.

As to quaternary structure, interacts with RNA. Part of large ribonucleo-protein particles that contain CAF1 and/or CAF2, and RNC1.

The protein resides in the plastid. The protein localises to the chloroplast. It localises to the mitochondrion. Functionally, binds specific group II introns in chloroplasts and facilitates their splicing. Acts on subgroup IIB introns. The substrates of the subgroup IIB also require the CRM domain proteins CAF1 or CAF2, with a simultaneous binding of CFM3 and CAF1 or CAF2. May influence the biogenesis of the mitochondrial small ribosomal subunit. This Oryza sativa subsp. japonica (Rice) protein is CRM-domain containing factor CFM3, chloroplastic/mitochondrial.